A 255-amino-acid chain; its full sequence is Small ribosomal subunit protein eS1 (255 aa).

Residues 1–18 (MAVGKNKRLSKGKKGLKK) are compositionally biased toward basic residues. A disordered region spans residues 1-28 (MAVGKNKRLSKGKKGLKKRTQDPFSRKD). Ala-2 bears the N-acetylalanine; partial mark. Residues 19-28 (RTQDPFSRKD) show a composition bias toward basic and acidic residues.

Belongs to the eukaryotic ribosomal protein eS1 family. As to quaternary structure, component of the small ribosomal subunit. Mature ribosomes consist of a small (40S) and a large (60S) subunit. The 40S subunit contains about 33 different proteins and 1 molecule of RNA (18S). The 60S subunit contains about 49 different proteins and 3 molecules of RNA (25S, 5.8S and 5S).

It localises to the cytoplasm. The chain is Small ribosomal subunit protein eS1 from Ajellomyces capsulatus (strain H143) (Darling's disease fungus).